The sequence spans 1035 residues: Cell-division control histidine kinase PdhS (1035 aa).

The tract at residues 1-613 (MSGSYPFIDI…HADGSEEPVD (613 aa)) is important for polar localization. The tract at residues 500–533 (QGLANTRAESETPVSETSSIEPVEPTPPVKTRSE) is disordered. The interaction with DivK stretch occupies residues 614-1035 (AHLNAIAWRG…VFPPTRVLAD (422 aa)). One can recognise a PAS domain in the interval 659-730 (HVEELKTILD…YLHGLSGNGV (72 aa)). The Histidine kinase domain occupies 802 to 1031 (RISHEIRTPL…VVEIVFPPTR (230 aa)). The residue at position 805 (histidine 805) is a Phosphohistidine; by autocatalysis.

In terms of assembly, interacts with DivK.

It is found in the cytoplasm. It carries out the reaction ATP + protein L-histidine = ADP + protein N-phospho-L-histidine.. Functionally, functions as a polar differentiation marker. Essential protein that, by localizing in the old pole of dividing cells, controls cell division and maturation, probably through control of DivK phosphorylation status and cellular distribution, which in turn regulates CtrA, a transcriptional regulator of the minB operon. The asymmetrical localization of this protein is probably required for cells to enter a new division cycle. The polypeptide is Cell-division control histidine kinase PdhS (pdhS) (Brucella suis biovar 1 (strain 1330)).